A 147-amino-acid polypeptide reads, in one-letter code: Small ribosomal subunit protein bS6 (147 aa).

A disordered region spans residues 96 to 147; it reads VTEPSPMMKAKEERFTKRDDREERSDRSEAPRAEAPAKAEAPAKAEDEAAAE. Residues 104–147 show a composition bias toward basic and acidic residues; that stretch reads KAKEERFTKRDDREERSDRSEAPRAEAPAKAEAPAKAEDEAAAE.

It belongs to the bacterial ribosomal protein bS6 family.

Functionally, binds together with bS18 to 16S ribosomal RNA. The sequence is that of Small ribosomal subunit protein bS6 from Photobacterium profundum (strain SS9).